Here is a 436-residue protein sequence, read N- to C-terminus: GTPase Der (436 aa).

2 EngA-type G domains span residues 4-167 (PIVA…GEEE) and 176-351 (IRLS…ENHK). GTP contacts are provided by residues 10–17 (GRPNVGKS), 57–61 (DTGGI), 119–122 (NKVD), 182–189 (GRPNVGKS), 229–233 (DTAGM), and 294–297 (NKWD). Residues 352–436 (KRVQSSTLNE…PIHIIARKRN (85 aa)) form the KH-like domain.

The protein belongs to the TRAFAC class TrmE-Era-EngA-EngB-Septin-like GTPase superfamily. EngA (Der) GTPase family. As to quaternary structure, associates with the 50S ribosomal subunit.

Functionally, GTPase that plays an essential role in the late steps of ribosome biogenesis. In Staphylococcus aureus (strain USA300), this protein is GTPase Der.